Reading from the N-terminus, the 406-residue chain is Fructose-1,6-bisphosphatase, chloroplastic (406 aa).

A chloroplast-targeting transit peptide spans 1–47; sequence MAAAATTSSHLLLLSRQQAAASLQCGLSFRRQPGRLAGGSSAPSVRC. Positions 128, 157, 178, 180, and 181 each coordinate Mg(2+). A substrate-binding site is contributed by 181–184; that stretch reads DGSS. An intrachain disulfide couples Cys-222 to Cys-227. Residues Asn-286, Tyr-318, Tyr-336, Tyr-338, and Lys-348 each coordinate substrate. Glu-354 is a binding site for Mg(2+).

The protein belongs to the FBPase class 1 family. As to quaternary structure, homotetramer. Mg(2+) serves as cofactor.

It localises to the plastid. The protein resides in the chloroplast stroma. The catalysed reaction is beta-D-fructose 1,6-bisphosphate + H2O = beta-D-fructose 6-phosphate + phosphate. The protein operates within carbohydrate biosynthesis; Calvin cycle. Inhibited by sodium chloride. Catalyzes the irreversible reaction from fructose-1,6-bisphosphate to fructose-6-phosphate and inorganic phosphate, to regenerate the primary CO(2) acceptor molecule, ribulose-1,5-bisphosphate. Involved in the regulation of photosynthetic performance and sucrose synthesis. The polypeptide is Fructose-1,6-bisphosphatase, chloroplastic (Oryza sativa subsp. indica (Rice)).